A 305-amino-acid chain; its full sequence is MPMEILEERGHLLTEQTNPQSQNLDQLSSLELVDLFNQQDQLTVTAIAGAREDLAAAIEIISDALAKGGRLFYIGAGTSGRLGVLDAVECPPTFCTPSELVQGILAGGASALLRSSEGLEDIAADGAQAIADHRITQLDVVVGITAGGTTPYVHGALDAARARGTKTIFIACVPESQAPCQADVNIRLLTGPEILAGSTRLKAGTVTKMALNILSTGAMVKLGKVYGNRMVDVAVTNRKLEDRAIRILRDLTDLNREEAAELLVASGQRVKLALLMHWSGLSAESAQAQLDRHGGNLRQAMDAAP.

Residues 61–224 (ISDALAKGGR…STGAMVKLGK (164 aa)) form the SIS domain. The active-site Proton donor is the Glu-89. Glu-120 is a catalytic residue.

The protein belongs to the GCKR-like family. MurNAc-6-P etherase subfamily. As to quaternary structure, homodimer.

It carries out the reaction N-acetyl-D-muramate 6-phosphate + H2O = N-acetyl-D-glucosamine 6-phosphate + (R)-lactate. It functions in the pathway amino-sugar metabolism; N-acetylmuramate degradation. Its function is as follows. Specifically catalyzes the cleavage of the D-lactyl ether substituent of MurNAc 6-phosphate, producing GlcNAc 6-phosphate and D-lactate. In Synechocystis sp. (strain ATCC 27184 / PCC 6803 / Kazusa), this protein is N-acetylmuramic acid 6-phosphate etherase.